A 434-amino-acid polypeptide reads, in one-letter code: Glutamyl-tRNA reductase (434 aa).

Substrate is bound by residues 49–52, Ser-109, 114–116, and Gln-120; these read TCNR and EPQ. Cys-50 functions as the Nucleophile in the catalytic mechanism. 189–194 is an NADP(+) binding site; sequence GAGEMC.

This sequence belongs to the glutamyl-tRNA reductase family. Homodimer.

It catalyses the reaction (S)-4-amino-5-oxopentanoate + tRNA(Glu) + NADP(+) = L-glutamyl-tRNA(Glu) + NADPH + H(+). It functions in the pathway porphyrin-containing compound metabolism; protoporphyrin-IX biosynthesis; 5-aminolevulinate from L-glutamyl-tRNA(Glu): step 1/2. Catalyzes the NADPH-dependent reduction of glutamyl-tRNA(Glu) to glutamate 1-semialdehyde (GSA). The sequence is that of Glutamyl-tRNA reductase from Trichlorobacter lovleyi (strain ATCC BAA-1151 / DSM 17278 / SZ) (Geobacter lovleyi).